A 124-amino-acid chain; its full sequence is Large ribosomal subunit protein uL18 (124 aa).

The protein belongs to the universal ribosomal protein uL18 family. As to quaternary structure, part of the 50S ribosomal subunit; part of the 5S rRNA/L5/L18/L25 subcomplex. Contacts the 5S and 23S rRNAs.

Its function is as follows. This is one of the proteins that bind and probably mediate the attachment of the 5S RNA into the large ribosomal subunit, where it forms part of the central protuberance. This Caldicellulosiruptor saccharolyticus (strain ATCC 43494 / DSM 8903 / Tp8T 6331) protein is Large ribosomal subunit protein uL18.